An 822-amino-acid polypeptide reads, in one-letter code: Tyrosine-protein kinase Fer (822 aa).

In terms of domain architecture, F-BAR spans M1–E259. Residues M1 to L300 form an important for interaction with membranes containing phosphoinositides region. Coiled-coil stretches lie at residues A123 to Y185 and T301 to E390. Y402 carries the phosphotyrosine modification. S434 bears the Phosphoserine mark. In terms of domain architecture, SH2 spans W460–I550. In terms of domain architecture, Protein kinase spans V563 to I816. ATP-binding positions include L569–V577 and K591. Y615 bears the Phosphotyrosine; by autocatalysis mark. The active-site Proton acceptor is the D684. Y714 carries the phosphotyrosine; by autocatalysis modification.

It belongs to the protein kinase superfamily. Tyr protein kinase family. Fes/fps subfamily. Homotrimer. Interacts with ARHGDIA, IRS1, JAK1, NRP1, PIK3R1, PLEC and TMF1. Interacts with PPP1CA and regulates its phosphorylation at 'Thr-320'. Interacts with CTNND1, EGFR, FLT3, PECAM1, PDGFR and STAT3. Interacts (via SH2 domain) with CTTN. Interacts with HSP90; this stabilizes phosphorylated FER and protects FER against proteasomal degradation. Component of a complex that contains at least FER, CTTN and PTK2/FAK1. In terms of processing, autophosphorylated. Polyubiquitinated; this leads to proteasomal degradation. As to expression, isoform 1 is detected in normal colon and in fibroblasts (at protein level). Isoform 3 is detected in normal testis, in colon carcinoma-derived metastases in lung, liver and ovary, and in colon carcinoma and hepato carcinoma cell lines (at protein level). Isoform 3 is not detected in normal colon or in normal fibroblasts (at protein level). Widely expressed.

It localises to the cytoplasm. Its subcellular location is the cytoskeleton. It is found in the cell membrane. The protein resides in the cell projection. The protein localises to the cell junction. It localises to the membrane. Its subcellular location is the nucleus. It is found in the cell cortex. The catalysed reaction is L-tyrosyl-[protein] + ATP = O-phospho-L-tyrosyl-[protein] + ADP + H(+). Activated by phosphatidic acid binding. Activated by hydrogen peroxide (in vitro). Activated by reactive oxygen species (ROS). In terms of biological role, tyrosine-protein kinase that acts downstream of cell surface receptors for growth factors and plays a role in the regulation of the actin cytoskeleton, microtubule assembly, lamellipodia formation, cell adhesion, cell migration and chemotaxis. Acts downstream of EGFR, KIT, PDGFRA and PDGFRB. Acts downstream of EGFR to promote activation of NF-kappa-B and cell proliferation. May play a role in the regulation of the mitotic cell cycle. Plays a role in the insulin receptor signaling pathway and in activation of phosphatidylinositol 3-kinase. Acts downstream of the activated FCER1 receptor and plays a role in FCER1 (high affinity immunoglobulin epsilon receptor)-mediated signaling in mast cells. Plays a role in the regulation of mast cell degranulation. Plays a role in leukocyte recruitment and diapedesis in response to bacterial lipopolysaccharide (LPS). Plays a role in synapse organization, trafficking of synaptic vesicles, the generation of excitatory postsynaptic currents and neuron-neuron synaptic transmission. Plays a role in neuronal cell death after brain damage. Phosphorylates CTTN, CTNND1, PTK2/FAK1, GAB1, PECAM1 and PTPN11. May phosphorylate JUP and PTPN1. Can phosphorylate STAT3, but the biological relevance of this depends on cell type and stimulus. The protein is Tyrosine-protein kinase Fer (FER) of Homo sapiens (Human).